The sequence spans 298 residues: Zinc import ATP-binding protein ZnuC (298 aa).

In terms of domain architecture, ABC transporter spans 17 to 232 (IELRNAGVYR…PEYVRLFGSR (216 aa)). ATP is bound at residue 49-56 (GQNGAGKS). Residues 273-298 (RGHCHVEDGHHHDHEHHHHEGGQPRA) form a disordered region. The segment covering 276–298 (CHVEDGHHHDHEHHHHEGGQPRA) has biased composition (basic and acidic residues).

The protein belongs to the ABC transporter superfamily. Zinc importer (TC 3.A.1.15.5) family. As to quaternary structure, the complex is composed of two ATP-binding proteins (ZnuC), two transmembrane proteins (ZnuB) and a solute-binding protein (ZnuA).

It localises to the cell inner membrane. It catalyses the reaction Zn(2+)(out) + ATP(in) + H2O(in) = Zn(2+)(in) + ADP(in) + phosphate(in) + H(+)(in). Functionally, part of the ABC transporter complex ZnuABC involved in zinc import. Responsible for energy coupling to the transport system. The chain is Zinc import ATP-binding protein ZnuC from Brucella melitensis biotype 1 (strain ATCC 23456 / CCUG 17765 / NCTC 10094 / 16M).